Reading from the N-terminus, the 424-residue chain is Serine--tRNA ligase (424 aa).

232 to 234 (TAE) lines the L-serine pocket. ATP is bound at residue 263 to 265 (RKE). Glu-286 is a binding site for L-serine. Position 350–353 (350–353 (EISS)) interacts with ATP. Ser-386 is a binding site for L-serine.

This sequence belongs to the class-II aminoacyl-tRNA synthetase family. Type-1 seryl-tRNA synthetase subfamily. Homodimer. The tRNA molecule binds across the dimer.

The protein resides in the cytoplasm. It catalyses the reaction tRNA(Ser) + L-serine + ATP = L-seryl-tRNA(Ser) + AMP + diphosphate + H(+). The catalysed reaction is tRNA(Sec) + L-serine + ATP = L-seryl-tRNA(Sec) + AMP + diphosphate + H(+). It functions in the pathway aminoacyl-tRNA biosynthesis; selenocysteinyl-tRNA(Sec) biosynthesis; L-seryl-tRNA(Sec) from L-serine and tRNA(Sec): step 1/1. Functionally, catalyzes the attachment of serine to tRNA(Ser). Is also able to aminoacylate tRNA(Sec) with serine, to form the misacylated tRNA L-seryl-tRNA(Sec), which will be further converted into selenocysteinyl-tRNA(Sec). This Thermodesulfovibrio yellowstonii (strain ATCC 51303 / DSM 11347 / YP87) protein is Serine--tRNA ligase.